The chain runs to 215 residues: Osmoprotectant import permease protein OsmW (215 aa).

Residues 18–202 (TFQHLWLVAL…LLAIVLDWLL (185 aa)) enclose the ABC transmembrane type-1 domain. The next 6 membrane-spanning stretches (helical) occupy residues 24 to 44 (LVALAVGLAIIIGVPLGVLIV), 51 to 73 (TPVLGAATLLLTIPSIALFGLMI), 78 to 100 (LIGHGIGVLPAVTAVFLYSLLPI), 132 to 152 (WVEIPMALPVIFGGIRTAVVM), 153 to 173 (NIGVMAIAAVIGAGGLGLLLL), and 183 to 203 (MLIAGALMICLLAIVLDWLLH).

The protein belongs to the binding-protein-dependent transport system permease family. The complex is composed of two ATP-binding proteins (OsmV), two transmembrane proteins (OsmW and OsmY) and a solute-binding protein (OsmX).

Its subcellular location is the cell inner membrane. In terms of biological role, part of the OsmU ABC transporter complex, which is involved in the uptake of osmoprotectants such as choline-O-sulfate and glycine betaine. Probably responsible for the translocation of the substrate across the membrane. In Salmonella typhimurium (strain LT2 / SGSC1412 / ATCC 700720), this protein is Osmoprotectant import permease protein OsmW (osmW).